The chain runs to 185 residues: Threonylcarbamoyl-AMP synthase (185 aa).

The region spanning 1 to 185 (MDNLQQVVSA…AFSDTVLRQG (185 aa)) is the YrdC-like domain.

Belongs to the SUA5 family. TsaC subfamily.

It is found in the cytoplasm. The catalysed reaction is L-threonine + hydrogencarbonate + ATP = L-threonylcarbamoyladenylate + diphosphate + H2O. Functionally, required for the formation of a threonylcarbamoyl group on adenosine at position 37 (t(6)A37) in tRNAs that read codons beginning with adenine. Catalyzes the conversion of L-threonine, HCO(3)(-)/CO(2) and ATP to give threonylcarbamoyl-AMP (TC-AMP) as the acyladenylate intermediate, with the release of diphosphate. This is Threonylcarbamoyl-AMP synthase from Photobacterium profundum (strain SS9).